The sequence spans 1352 residues: DNA-directed RNA polymerase subunit beta (1352 aa).

This sequence belongs to the RNA polymerase beta chain family. As to quaternary structure, the RNAP catalytic core consists of 2 alpha, 1 beta, 1 beta' and 1 omega subunit. When a sigma factor is associated with the core the holoenzyme is formed, which can initiate transcription.

It catalyses the reaction RNA(n) + a ribonucleoside 5'-triphosphate = RNA(n+1) + diphosphate. Its function is as follows. DNA-dependent RNA polymerase catalyzes the transcription of DNA into RNA using the four ribonucleoside triphosphates as substrates. This Hydrogenovibrio crunogenus (strain DSM 25203 / XCL-2) (Thiomicrospira crunogena) protein is DNA-directed RNA polymerase subunit beta.